The following is a 453-amino-acid chain: Ribulose bisphosphate carboxylase large chain (453 aa).

The propeptide occupies 1-2 (MS). Pro3 carries the post-translational modification N-acetylproline. At Lys14 the chain carries N6,N6,N6-trimethyllysine. Substrate contacts are provided by Asn123 and Thr173. The active-site Proton acceptor is the Lys175. Substrate is bound at residue Lys177. Residues Lys201, Asp203, and Glu204 each contribute to the Mg(2+) site. Lys201 carries the N6-carboxylysine modification. Residue His294 is the Proton acceptor of the active site. Residues Arg295, His327, and Ser379 each contribute to the substrate site.

The protein belongs to the RuBisCO large chain family. Type I subfamily. Heterohexadecamer of 8 large chains and 8 small chains; disulfide-linked. The disulfide link is formed within the large subunit homodimers. It depends on Mg(2+) as a cofactor. Post-translationally, the disulfide bond which can form in the large chain dimeric partners within the hexadecamer appears to be associated with oxidative stress and protein turnover.

It is found in the plastid. Its subcellular location is the chloroplast. The catalysed reaction is 2 (2R)-3-phosphoglycerate + 2 H(+) = D-ribulose 1,5-bisphosphate + CO2 + H2O. It carries out the reaction D-ribulose 1,5-bisphosphate + O2 = 2-phosphoglycolate + (2R)-3-phosphoglycerate + 2 H(+). Its function is as follows. RuBisCO catalyzes two reactions: the carboxylation of D-ribulose 1,5-bisphosphate, the primary event in carbon dioxide fixation, as well as the oxidative fragmentation of the pentose substrate in the photorespiration process. Both reactions occur simultaneously and in competition at the same active site. The chain is Ribulose bisphosphate carboxylase large chain from Phuopsis stylosa (Caucasian crosswort).